The sequence spans 346 residues: MIEFKQVTKTFHSGNQTVTALDNVNLHVARGEIYGVIGFSGAGKSTLIRSANLLERPTSGEVLINGVNLATLKSRELQKAKRNIGMIFQHFNLLQSKTVFDNVATPLKLTRTPKADIRKRVTELLSFVGLSDKADNYPEQLSGGQKQRIGIARALATNPEVLLCDEATSALDPDTTSSILHLLKKINIEYNITILMITHEMSVIREICDKVAVMEKGRIIEEGSVLSIFSNPQHPTTEKFVRSIIPTGLPARVKEALQQKEPNRRIYEVTVTGDSSHSDLLRSLIQTFGIEVDILHATMNDIQGTSFGRIYFDLRAEPEILAEASNYLKSHPLQPKEVTGDARVAA.

In terms of domain architecture, ABC transporter spans 2–241; the sequence is IEFKQVTKTF…PQHPTTEKFV (240 aa). Position 38–45 (38–45) interacts with ATP; sequence GFSGAGKS.

This sequence belongs to the ABC transporter superfamily. Methionine importer (TC 3.A.1.24) family. As to quaternary structure, the complex is composed of two ATP-binding proteins (MetN), two transmembrane proteins (MetI) and a solute-binding protein (MetQ).

The protein localises to the cell membrane. The enzyme catalyses L-methionine(out) + ATP + H2O = L-methionine(in) + ADP + phosphate + H(+). It catalyses the reaction D-methionine(out) + ATP + H2O = D-methionine(in) + ADP + phosphate + H(+). Part of the ABC transporter complex MetNIQ involved in methionine import. Responsible for energy coupling to the transport system. The polypeptide is Methionine import ATP-binding protein MetN 1 (Shouchella clausii (strain KSM-K16) (Alkalihalobacillus clausii)).